A 385-amino-acid polypeptide reads, in one-letter code: Lipid-A-disaccharide synthase (385 aa).

Belongs to the LpxB family.

It catalyses the reaction a lipid X + a UDP-2-N,3-O-bis[(3R)-3-hydroxyacyl]-alpha-D-glucosamine = a lipid A disaccharide + UDP + H(+). It participates in bacterial outer membrane biogenesis; LPS lipid A biosynthesis. Condensation of UDP-2,3-diacylglucosamine and 2,3-diacylglucosamine-1-phosphate to form lipid A disaccharide, a precursor of lipid A, a phosphorylated glycolipid that anchors the lipopolysaccharide to the outer membrane of the cell. This chain is Lipid-A-disaccharide synthase, found in Xylella fastidiosa (strain M12).